A 375-amino-acid polypeptide reads, in one-letter code: Alcohol dehydrogenase 1 (375 aa).

The residue at position 2 (Ser2) is an N-acetylserine. Zn(2+)-binding residues include Cys47, His68, Cys98, Cys101, Cys104, Cys112, and Cys175. NAD(+) is bound by residues 200–205 (WSGRVG), Asp224, and Lys229. Lys234 bears the N6-succinyllysine mark. 293 to 295 (VGV) is a binding site for NAD(+). Position 340 is an N6-succinyllysine (Lys340). Arg370 serves as a coordination point for NAD(+).

The protein belongs to the zinc-containing alcohol dehydrogenase family. Class-I subfamily. As to quaternary structure, homodimer. The cofactor is Zn(2+).

Its subcellular location is the cytoplasm. It carries out the reaction a primary alcohol + NAD(+) = an aldehyde + NADH + H(+). The enzyme catalyses a secondary alcohol + NAD(+) = a ketone + NADH + H(+). The chain is Alcohol dehydrogenase 1 (ADH1) from Geomys attwateri (Attwater's pocket gopher).